An 84-amino-acid polypeptide reads, in one-letter code: Small ribosomal subunit protein bS20 (84 aa).

Belongs to the bacterial ribosomal protein bS20 family.

Binds directly to 16S ribosomal RNA. This is Small ribosomal subunit protein bS20 from Lacticaseibacillus casei (strain BL23) (Lactobacillus casei).